The sequence spans 358 residues: Testis-specific serine/threonine-protein kinase 2 (358 aa).

The region spanning 12-272 (YIVGINLGKG…IDEILSHSWL (261 aa)) is the Protein kinase domain. ATP contacts are provided by residues 18-26 (LGKGSYAKV) and Lys41. Catalysis depends on Asp136, which acts as the Proton acceptor. Composition is skewed to basic and acidic residues over residues 296-315 (DCKL…DHKL) and 329-358 (NEDR…KAST). Positions 296–358 (DCKLDTRPGS…SGAEVEKAST (63 aa)) are disordered.

This sequence belongs to the protein kinase superfamily. CAMK Ser/Thr protein kinase family. In terms of assembly, interacts with TSSK1B. Interacts with HSP90; this interaction stabilizes TSSK2. Mg(2+) serves as cofactor. In terms of processing, autophosphorylated. Ubiquitinated; HSP90 activity negatively regulates ubiquitination and degradation. As to expression, testis-specific. Expressed only in the spermatids postmeiotically at the final stages of cytodifferentiation in the seminiferous tubules (at protein level). Not detected in released sperms in the lumen of the seminiferous tubules. Also present in the epididymal sperm (at protein level).

Its subcellular location is the cytoplasm. It is found in the cytoskeleton. It localises to the microtubule organizing center. The protein resides in the centrosome. The protein localises to the centriole. Its subcellular location is the cytoplasmic vesicle. It is found in the secretory vesicle. It localises to the acrosome. It carries out the reaction L-seryl-[protein] + ATP = O-phospho-L-seryl-[protein] + ADP + H(+). It catalyses the reaction L-threonyl-[protein] + ATP = O-phospho-L-threonyl-[protein] + ADP + H(+). With respect to regulation, activated by phosphorylation on Thr-174, potentially by autophosphorylation. Testis-specific serine/threonine-protein kinase required during spermatid development. Phosphorylates 'Ser-281' of TSKS and SPAG16. Involved in the late stages of spermatogenesis, during the reconstruction of the cytoplasm. During spermatogenesis, required for the transformation of a ring-shaped structure around the base of the flagellum originating from the chromatoid body. The chain is Testis-specific serine/threonine-protein kinase 2 (Tssk2) from Mus musculus (Mouse).